Consider the following 104-residue polypeptide: Class I hydrophobin 12 (104 aa).

An N-terminal signal peptide occupies residues 1-25; that stretch reads MFSKATLFFTAAVVIVAAGATPTTS. Cystine bridges form between Cys27–Cys85, Cys34–Cys79, Cys35–Cys67, and Cys86–Cys99.

Belongs to the fungal hydrophobin family. Self-assembles to form functional amyloid fibrils called rodlets. Self-assembly into fibrillar rodlets occurs spontaneously at hydrophobic:hydrophilic interfaces and the rodlets further associate laterally to form amphipathic monolayers.

It is found in the secreted. The protein resides in the cell wall. Aerial growth, conidiation, and dispersal of filamentous fungi in the environment rely upon a capability of their secreting small amphipathic proteins called hydrophobins (HPBs) with low sequence identity. Class I can self-assemble into an outermost layer of rodlet bundles on aerial cell surfaces, conferring cellular hydrophobicity that supports fungal growth, development and dispersal; whereas Class II form highly ordered films at water-air interfaces through intermolecular interactions but contribute nothing to the rodlet structure. Hydph12 is a class I hydrophobin involved in the formation of mycelium knots. This chain is Class I hydrophobin 12, found in Pleurotus ostreatus (strain PC15) (Oyster mushroom).